A 248-amino-acid chain; its full sequence is Opiorphin prepropeptide (248 aa).

A signal peptide spans methionine 1–serine 21. Glutamine 22 carries the post-translational modification Pyrrolidone carboxylic acid. Residues aspartate 150 to alanine 198 are disordered. A glycan (N-linked (GlcNAc...) asparagine) is linked at asparagine 218.

The protein belongs to the PROL1/PROL3 family. Abundantly expressed in lacrimal gland where it found in the secretory endpieces. Also expressed at modest levels in the submandibular gland.

It is found in the secreted. Opiorphin is an endogenous inhibitor of neprilysin and aminopeptidase N. Inhibits the breakdown of substance P, Mca-BK2 and Met-enkephalin by neprilysin in vitro with IC(50) values of 29 uM, 33 uM and 33 uM respectively. Inhibits the breakdown of Ala-pNA by aminopeptidase N in vitro with an IC(50) of 65 uM. Has a potent analgesic effect when administered to rats by intravenous injection. This is Opiorphin prepropeptide from Homo sapiens (Human).